A 607-amino-acid chain; its full sequence is Glucose-6-phosphate isomerase, glycosomal (607 aa).

Catalysis depends on glutamate 411, which acts as the Proton donor. Active-site residues include histidine 442 and lysine 571. The Microbody targeting signal motif lies at 605–607; that stretch reads SHL.

This sequence belongs to the GPI family. Homodimer.

The protein localises to the glycosome. It catalyses the reaction alpha-D-glucose 6-phosphate = beta-D-fructose 6-phosphate. The protein operates within carbohydrate degradation; glycolysis; D-glyceraldehyde 3-phosphate and glycerone phosphate from D-glucose: step 2/4. This Trypanosoma brucei brucei protein is Glucose-6-phosphate isomerase, glycosomal (PGI).